We begin with the raw amino-acid sequence, 108 residues long: Probable 4-amino-4-deoxy-L-arabinose-phosphoundecaprenol flippase subunit ArnE (108 aa).

Transmembrane regions (helical) follow at residues 36–56, 58–78, and 85–105; these read SLWL…LVLQ, LDVG…TLAG, and PVDV…FQLG.

It belongs to the ArnE family. Heterodimer of ArnE and ArnF.

The protein resides in the cell inner membrane. It participates in bacterial outer membrane biogenesis; lipopolysaccharide biosynthesis. In terms of biological role, translocates 4-amino-4-deoxy-L-arabinose-phosphoundecaprenol (alpha-L-Ara4N-phosphoundecaprenol) from the cytoplasmic to the periplasmic side of the inner membrane. The protein is Probable 4-amino-4-deoxy-L-arabinose-phosphoundecaprenol flippase subunit ArnE of Pseudomonas syringae pv. syringae (strain B728a).